Reading from the N-terminus, the 162-residue chain is Putative ankyrin repeat protein R664 (162 aa).

3 ANK repeats span residues 10-40, 47-78, and 82-111; these read KKLVEFLLYSNQDCSLIVIDALITIGANVNY, NDTPILSVITKTSESNPETVKLLLDKGADVNY, and YHETALMRTIKYGNFGIAKILLDYGANPYL.

This chain is Putative ankyrin repeat protein R664, found in Acanthamoeba polyphaga mimivirus (APMV).